The primary structure comprises 432 residues: Tyrosine-protein phosphatase non-receptor type 1 (432 aa).

Met1 carries the post-translational modification N-acetylmethionine. The Tyrosine-protein phosphatase domain occupies 3–277; that stretch reads MEKEFEEIDK…RFSYLAVIEG (275 aa). Phosphotyrosine is present on Tyr20. Phosphoserine; by CLK1, CLK2 and PKB/AKT1 or PKB/AKT2 is present on Ser50. Position 66 is a phosphotyrosine; by EGFR (Tyr66). Substrate contacts are provided by residues Asp181 and 215 to 221; that span reads CSAGIGR. The active-site Phosphocysteine intermediate is Cys215. Cys215 bears the Cysteine persulfide mark. The residue at position 215 (Cys215) is an S-nitrosocysteine; in reversibly inhibited form. Ser242 and Ser243 each carry phosphoserine; by CLK1 and CLK2. Residue Gln262 coordinates substrate. Disordered regions lie at residues 297–322 and 335–399; these read EDLD…PHNG and SEET…EEHK. 3 positions are modified to phosphoserine: Ser335, Ser362, and Ser364. The span at 354 to 364 shows a compositional bias: low complexity; the sequence is SSAMHSVSSMS. Residue Thr367 is modified to Phosphothreonine.

This sequence belongs to the protein-tyrosine phosphatase family. Non-receptor class 1 subfamily. In terms of assembly, interacts with EPHA3 (phosphorylated); dephosphorylates EPHA3 and may regulate its trafficking and function. Interacts with MET. Interacts with NCK1. Post-translationally, ser-50 is the major site of phosphorylation as compared to Ser-242 and Ser-243. Activated by phosphorylation at Ser-50. In terms of processing, S-nitrosylation of Cys-215 inactivates the enzyme activity. Sulfhydration at Cys-215 following endoplasmic reticulum stress inactivates the enzyme activity, promoting EIF2AK3/PERK activity. In terms of tissue distribution, most abundant in testis. Also found in kidney, spleen, muscle, liver, heart and brain.

It localises to the endoplasmic reticulum membrane. It carries out the reaction O-phospho-L-tyrosyl-[protein] + H2O = L-tyrosyl-[protein] + phosphate. Its function is as follows. Tyrosine-protein phosphatase which acts as a regulator of endoplasmic reticulum unfolded protein response. Mediates dephosphorylation of EIF2AK3/PERK; inactivating the protein kinase activity of EIF2AK3/PERK. May play an important role in CKII- and p60c-src-induced signal transduction cascades. May regulate the EFNA5-EPHA3 signaling pathway which modulates cell reorganization and cell-cell repulsion. May also regulate the hepatocyte growth factor receptor signaling pathway through dephosphorylation of MET. This Mus musculus (Mouse) protein is Tyrosine-protein phosphatase non-receptor type 1 (Ptpn1).